A 444-amino-acid polypeptide reads, in one-letter code: NAD-capped RNA hydrolase NUDT12 (444 aa).

ANK repeat units lie at residues 11 to 40 (EIIS…SLLN) and 60 to 80 (SRQT…ANLL). At Lys-167 the chain carries N6-succinyllysine. Residues Cys-266 and Cys-269 each contribute to the Zn(2+) site. N6-succinyllysine is present on Lys-274. Positions 284 and 289 each coordinate Zn(2+). Residues Tyr-300, 336-338 (AGF), Glu-352, Glu-356, and Glu-397 contribute to the substrate site. One can recognise a Nudix hydrolase domain in the interval 301–435 (PRVDPVVIMQ…SRAIAHQLIK (135 aa)). Mg(2+)-binding residues include Ala-336, Glu-352, Glu-356, and Glu-397. The Nudix box motif lies at 337–358 (GFIEPGETIEDAVRREVEEESG). A Microbody targeting signal motif is present at residues 442–444 (PNL).

The protein belongs to the Nudix hydrolase family. NudC subfamily. Homodimer. Homodimerization is essential for its catalytic activity and protein stability. Interacts (via ANK repeats) with BLMH. Requires Mg(2+) as cofactor. Zn(2+) is required as a cofactor.

Its subcellular location is the cytoplasm. The protein resides in the peroxisome. It is found in the cytoplasmic granule. It catalyses the reaction a 5'-end NAD(+)-phospho-ribonucleoside in mRNA + H2O = a 5'-end phospho-adenosine-phospho-ribonucleoside in mRNA + beta-nicotinamide D-ribonucleotide + 2 H(+). It carries out the reaction NAD(+) + H2O = beta-nicotinamide D-ribonucleotide + AMP + 2 H(+). The enzyme catalyses NADH + H2O = reduced beta-nicotinamide D-ribonucleotide + AMP + 2 H(+). The catalysed reaction is NADPH + H2O = reduced beta-nicotinamide D-ribonucleotide + adenosine 2',5'-bisphosphate + 2 H(+). In terms of biological role, mRNA decapping enzyme that specifically removes the nicotinamide adenine dinucleotide (NAD) cap from a subset of mRNAs by hydrolyzing the diphosphate linkage to produce nicotinamide mononucleotide (NMN) and 5' monophosphate mRNA. The NAD-cap is present at the 5'-end of some RNAs; in contrast to the canonical N7 methylguanosine (m7G) cap, the NAD cap promotes mRNA decay. Preferentially acts on NAD-capped transcripts in response to nutrient stress. Also acts on free nicotinamide adenine dinucleotide molecules: hydrolyzes NAD(H) into NMN(H) and AMP, and NADPH into NMNH and 2',5'-ADP. May act to regulate the concentration of peroxisomal nicotinamide nucleotide cofactors required for oxidative metabolism in this organelle. Regulates the levels of circadian clock components PER1, PER2, PER3 and CRY2 in the liver. In Bos taurus (Bovine), this protein is NAD-capped RNA hydrolase NUDT12.